Consider the following 238-residue polypeptide: Polynucleotide 3'-phosphatase (238 aa).

Belongs to the DNA 3' phosphatase family.

The protein resides in the nucleus. The enzyme catalyses a 3'end (2'-deoxyribonucleotide 3'-phosphate)-DNA + H2O = a 3'-end 2'-deoxyribonucleotide-DNA + phosphate. Its function is as follows. Dephosphorylate DNA's 3'-phosphate termini. Has a role in the repair of breaks in single-stranded DNA. The chain is Polynucleotide 3'-phosphatase (TPP1) from Saccharomyces cerevisiae (strain ATCC 204508 / S288c) (Baker's yeast).